The sequence spans 98 residues: NADH-ubiquinone oxidoreductase chain 4L (98 aa).

The next 3 helical transmembrane spans lie at 1 to 21, 31 to 51, and 61 to 81; these read MSLT…GLLM, LCLE…VLTI, and IILL…LVVV.

Belongs to the complex I subunit 4L family. Core subunit of respiratory chain NADH dehydrogenase (Complex I) which is composed of 45 different subunits.

It localises to the mitochondrion inner membrane. The catalysed reaction is a ubiquinone + NADH + 5 H(+)(in) = a ubiquinol + NAD(+) + 4 H(+)(out). Core subunit of the mitochondrial membrane respiratory chain NADH dehydrogenase (Complex I) which catalyzes electron transfer from NADH through the respiratory chain, using ubiquinone as an electron acceptor. Part of the enzyme membrane arm which is embedded in the lipid bilayer and involved in proton translocation. This Chalinolobus tuberculatus (New Zealand long-tailed bat) protein is NADH-ubiquinone oxidoreductase chain 4L (MT-ND4L).